The sequence spans 684 residues: Multisite-specific tRNA:(cytosine-C(5))-methyltransferase (684 aa).

The segment covering Met-1–Lys-12 has biased composition (basic residues). Residues Met-1–Gln-24 are disordered. Residues Cys-173–Lys-179, Asp-202, Asp-229, and Asp-257 each bind S-adenosyl-L-methionine. The active-site Nucleophile is the Cys-310. Thr-426 bears the Phosphothreonine mark. The residue at position 431 (Ser-431) is a Phosphoserine. Positions Lys-650–Asn-684 are disordered. Positions Ala-655–Thr-665 are enriched in basic and acidic residues. Residues Glu-666 to Asn-684 are compositionally biased toward low complexity. Ser-667 carries the phosphoserine modification.

Belongs to the class I-like SAM-binding methyltransferase superfamily. RsmB/NOP family. TRM4 subfamily.

The protein localises to the nucleus. The protein resides in the nucleolus. The catalysed reaction is cytidine(34) in tRNA precursor + S-adenosyl-L-methionine = 5-methylcytidine(34) in tRNA precursor + S-adenosyl-L-homocysteine + H(+). It carries out the reaction cytidine(40) in tRNA precursor + S-adenosyl-L-methionine = 5-methylcytidine(40) in tRNA precursor + S-adenosyl-L-homocysteine + H(+). It catalyses the reaction cytidine(48) in tRNA + S-adenosyl-L-methionine = 5-methylcytidine(48) in tRNA + S-adenosyl-L-homocysteine + H(+). The enzyme catalyses cytidine(49) in tRNA + S-adenosyl-L-methionine = 5-methylcytidine(49) in tRNA + S-adenosyl-L-homocysteine + H(+). Its function is as follows. Methylates cytosine to m5C at several positions in different tRNAs and pre-tRNAs containing intron. Able to modify tRNAs at all four positions (34, 40, 48 and 49) at which m5C has been found in tRNAs. May be involved in ribosome biogenesis as its disruption leads to increased sensitivity to the antibiotic paromomycin. The chain is Multisite-specific tRNA:(cytosine-C(5))-methyltransferase (NCL1) from Saccharomyces cerevisiae (strain ATCC 204508 / S288c) (Baker's yeast).